The chain runs to 2226 residues: Rotatin (2226 aa).

Residues 295–345 (ARGTHHSQNPSPGSSSPRPSVVGRTGQRPRGDGQDWDAASSSGSSSHAHVN) form a disordered region. Composition is skewed to low complexity over residues 304-318 (PSPG…VVGR) and 332-343 (AASSSGSSSHAH). S310 bears the Phosphoserine mark. At K811 the chain carries N6-acetyllysine. Positions 1534 to 1554 (SRTSQDRDPSSLSTSETTVAP) are disordered. Residues 1543-1554 (SSLSTSETTVAP) are compositionally biased toward polar residues.

Belongs to the rotatin family. Interacts with PPP1R35; this interaction allows the mutual recruitment to the centriole.

The protein localises to the cytoplasm. The protein resides in the cytoskeleton. It is found in the cilium basal body. It localises to the microtubule organizing center. Its subcellular location is the centrosome. In terms of biological role, involved in the genetic cascade that governs left-right specification. Plays a role in the maintenance of a normal ciliary structure. Required for correct asymmetric expression of NODAL, LEFTY and PITX2. The chain is Rotatin from Homo sapiens (Human).